A 106-amino-acid polypeptide reads, in one-letter code: Urease subunit beta (106 aa).

This sequence belongs to the urease beta subunit family. As to quaternary structure, heterotrimer of UreA (gamma), UreB (beta) and UreC (alpha) subunits. Three heterotrimers associate to form the active enzyme.

It is found in the cytoplasm. The catalysed reaction is urea + 2 H2O + H(+) = hydrogencarbonate + 2 NH4(+). It functions in the pathway nitrogen metabolism; urea degradation; CO(2) and NH(3) from urea (urease route): step 1/1. This chain is Urease subunit beta, found in Synechococcus sp. (strain CC9605).